A 377-amino-acid polypeptide reads, in one-letter code: Succinyl-diaminopimelate desuccinylase (377 aa).

Residue histidine 67 participates in Zn(2+) binding. Aspartate 69 is an active-site residue. A Zn(2+)-binding site is contributed by aspartate 100. The active-site Proton acceptor is the glutamate 134. Zn(2+) is bound by residues glutamate 135, glutamate 163, and histidine 349.

It belongs to the peptidase M20A family. DapE subfamily. As to quaternary structure, homodimer. It depends on Zn(2+) as a cofactor. Requires Co(2+) as cofactor.

The catalysed reaction is N-succinyl-(2S,6S)-2,6-diaminopimelate + H2O = (2S,6S)-2,6-diaminopimelate + succinate. The protein operates within amino-acid biosynthesis; L-lysine biosynthesis via DAP pathway; LL-2,6-diaminopimelate from (S)-tetrahydrodipicolinate (succinylase route): step 3/3. Functionally, catalyzes the hydrolysis of N-succinyl-L,L-diaminopimelic acid (SDAP), forming succinate and LL-2,6-diaminopimelate (DAP), an intermediate involved in the bacterial biosynthesis of lysine and meso-diaminopimelic acid, an essential component of bacterial cell walls. The sequence is that of Succinyl-diaminopimelate desuccinylase from Haemophilus influenzae (strain PittEE).